Reading from the N-terminus, the 430-residue chain is MTVKTEAARSTLTYSRMRGMVAILIAFMKQRRMGLNDFIQKLANNSYACKHPEVQSYLKISQPQEPELMNANPSPPPSPSQQINLGPSSNPHAKPSDFHFLKVIGKGSFGKVLLARHKAEEAFYAVKVLQKKAILKKKEEKHIMSERNVLLKNVKHPFLVGLHFSFQTADKLYFVLDYINGGELFYHLQRERCFLEPRARFYAAEIASALGYLHSLNIVYRDLKPENILLDSQGHIVLTDFGLCKENIEHNGTTSTFCGTPEYLAPEVLHKQPYDRTVDWWCLGAVLYEMLYGLPPFYSRNTAEMYDNILNKPLQLKNITNSARHLLEGLLQKDRTKRLGAKDDFMEIKSHIFFSLINWDDLINKKITPPFNPNVSGPSDLRHFDPEFTEEPVPSSIGRSPDSILVTASVKEAAEAFLGFSYAPPMDSFL.

A necessary for localization to the mitochondria region spans residues Met-1–Ile-60. Residues Pro-66–His-92 form a disordered region. Ser-74 is subject to Phosphoserine. Ser-78 is modified (phosphoserine; by MAPK7). Polar residues predominate over residues Gln-81 to Pro-91. Positions Phe-98–Phe-354 constitute a Protein kinase domain. Residues Ile-104–Val-112 and Lys-127 contribute to the ATP site. The short motif at Lys-131 to Lys-141 is the Nuclear localization signal element. Asp-222 (proton acceptor) is an active-site residue. Residue Thr-256 is modified to Phosphothreonine; by PDPK1. The 76-residue stretch at Ser-355 to Leu-430 folds into the AGC-kinase C-terminal domain. Thr-368 carries the phosphothreonine; by PKA modification. A phosphoserine mark is found at Ser-396, Ser-400, and Ser-421.

This sequence belongs to the protein kinase superfamily. AGC Ser/Thr protein kinase family. As to quaternary structure, homodimer; disulfide-linked. Forms a trimeric complex with FBXW7 and NOTCH1. Interacts with MAPK3/ERK1, MAPK1/ERK2, MAP2K1/MEK1, MAP2K2/MEK2, NEDD4, NEDD4L, MAPK7, CREB1, SLC9A3R2/NHERF2 and KCNJ1/ROMK1. Associates with the mammalian target of rapamycin complex 2 (mTORC2) via an interaction with MAPKAP1/SIN1. Interacts with MAPT/TAU. Regulated by phosphorylation. Activated by phosphorylation on Ser-421 by mTORC2, transforming it into a substrate for PDPK1 which phosphorylates it on Thr-256. Phosphorylation on Ser-396 and Ser-400 are also essential for its activity. Phosphorylation on Ser-78 by MAPK7 is required for growth factor-induced cell cycle progression. In terms of processing, ubiquitinated by NEDD4L; which promotes proteasomal degradation. Ubiquitinated by SYVN1 at the endoplasmic reticulum; which promotes rapid proteasomal degradation and maintains a high turnover rate in resting cells. In terms of tissue distribution, expressed in most tissues with highest levels in the ovary, thymus and lung. In the kidney, expressed within glomeruli of the cortex, at low levels in outer medulla and moderate levels in inner medulla and papilla.

It localises to the cytoplasm. It is found in the nucleus. The protein resides in the endoplasmic reticulum membrane. The protein localises to the cell membrane. Its subcellular location is the mitochondrion. The enzyme catalyses L-seryl-[protein] + ATP = O-phospho-L-seryl-[protein] + ADP + H(+). It catalyses the reaction L-threonyl-[protein] + ATP = O-phospho-L-threonyl-[protein] + ADP + H(+). With respect to regulation, two specific sites, one in the kinase domain (Thr-256) and the other in the C-terminal regulatory region (Ser-421), need to be phosphorylated for its full activation. Phosphorylation at Ser-396 and Ser-400 are also essential for its activity. Activated by WNK1, WNK2, WNK3 and WNK4. Functionally, serine/threonine-protein kinase which is involved in the regulation of a wide variety of ion channels, membrane transporters, cellular enzymes, transcription factors, neuronal excitability, cell growth, proliferation, survival, migration and apoptosis. Plays an important role in cellular stress response. Contributes to regulation of renal Na(+) retention, renal K(+) elimination, salt appetite, gastric acid secretion, intestinal Na(+)/H(+) exchange and nutrient transport, insulin-dependent salt sensitivity of blood pressure, salt sensitivity of peripheral glucose uptake, cardiac repolarization and memory consolidation. Up-regulates Na(+) channels: SCNN1A/ENAC, SCN5A and ASIC1/ACCN2, K(+) channels: KCNJ1/ROMK1, KCNA1-5, KCNQ1-5 and KCNE1, epithelial Ca(2+) channels: TRPV5 and TRPV6, chloride channels: BSND, CLCN2 and CFTR, glutamate transporters: SLC1A3/EAAT1, SLC1A2 /EAAT2, SLC1A1/EAAT3, SLC1A6/EAAT4 and SLC1A7/EAAT5, amino acid transporters: SLC1A5/ASCT2, SLC38A1/SN1 and SLC6A19, creatine transporter: SLC6A8, Na(+)/dicarboxylate cotransporter: SLC13A2/NADC1, Na(+)-dependent phosphate cotransporter: SLC34A2/NAPI-2B, glutamate receptor: GRIK2/GLUR6. Up-regulates carriers: SLC9A3/NHE3, SLC12A1/NKCC2, SLC12A3/NCC, SLC5A3/SMIT, SLC2A1/GLUT1, SLC5A1/SGLT1 and SLC15A2/PEPT2. Regulates enzymes: GSK3A/B, PMM2 and Na(+)/K(+) ATPase, and transcription factors: CTNNB1 and nuclear factor NF-kappa-B. Stimulates sodium transport into epithelial cells by enhancing the stability and expression of SCNN1A/ENAC. This is achieved by phosphorylating the NEDD4L ubiquitin E3 ligase, promoting its interaction with 14-3-3 proteins, thereby preventing it from binding to SCNN1A/ENAC and targeting it for degradation. Regulates store-operated Ca(+2) entry (SOCE) by stimulating ORAI1 and STIM1. Regulates KCNJ1/ROMK1 directly via its phosphorylation or indirectly via increased interaction with SLC9A3R2/NHERF2. Phosphorylates MDM2 and activates MDM2-dependent ubiquitination of p53/TP53. Phosphorylates SLC2A4/GLUT4 and up-regulates its activity. Phosphorylates APBB1/FE65 and promotes its localization to the nucleus. Phosphorylates FBXW7 and plays an inhibitory role in the NOTCH1 signaling. Phosphorylates FOXO1 resulting in its relocalization from the nucleus to the cytoplasm. Phosphorylates FOXO3, promoting its exit from the nucleus and interference with FOXO3-dependent transcription. Phosphorylates BRAF and MAP3K3/MEKK3 and inhibits their activity. Phosphorylates SLC9A3/NHE3 in response to dexamethasone, resulting in its activation and increased localization at the cell membrane. Phosphorylates CREB1. Necessary for vascular remodeling during angiogenesis. Phosphorylates MAPT/TAU and mediates microtubule depolymerization and neurite formation in hippocampal neurons. Phosphorylates MAPK1/ERK2 and activates it by enhancing its interaction with MAP2K1/MEK1 and MAP2K2/MEK2. May also play an important role in the development of particular groups of neurons in the postnatal brain. This Rattus norvegicus (Rat) protein is Serine/threonine-protein kinase Sgk1 (Sgk1).